We begin with the raw amino-acid sequence, 340 residues long: Guanine nucleotide-binding protein G(I)/G(S)/G(T) subunit beta-2 (340 aa).

Serine 2 carries the post-translational modification N-acetylserine. 7 WD repeats span residues glycine 53–aspartate 83, leucine 95–serine 125, glycine 141–aspartate 170, glycine 182–aspartate 212, glycine 224–aspartate 254, asparagine 268–aspartate 298, and glycine 310–asparagine 340. A Phosphotyrosine modification is found at tyrosine 239.

It belongs to the WD repeat G protein beta family. As to quaternary structure, g proteins are composed of 3 units, alpha, beta and gamma. In this context, interacts with GNAI2 and GNG2. Interacts with ARHGEF18 and RASD2. Interacts with ATXN10. Interacts with SCN8A. As to expression, expressed in all cardiac subcompartments and in the brain, with highest levels in the atrioventricular node and brain.

The protein localises to the cytoplasm. The protein resides in the perinuclear region. It is found in the cell membrane. Guanine nucleotide-binding proteins (G proteins) are involved as a modulator or transducer in various transmembrane signaling systems. The beta and gamma chains are required for the GTPase activity, for replacement of GDP by GTP, and for G protein-effector interaction. The sequence is that of Guanine nucleotide-binding protein G(I)/G(S)/G(T) subunit beta-2 (GNB2) from Homo sapiens (Human).